A 516-amino-acid polypeptide reads, in one-letter code: Methionine--tRNA ligase (516 aa).

Residues 14–24 carry the 'HIGH' region motif; the sequence is SYPNGKPHIGH. Positions 302-306 match the 'KMSKS' region motif; the sequence is KMSKS. Residue Lys-305 coordinates ATP.

Belongs to the class-I aminoacyl-tRNA synthetase family. MetG type 2B subfamily. Monomer.

It localises to the cytoplasm. It catalyses the reaction tRNA(Met) + L-methionine + ATP = L-methionyl-tRNA(Met) + AMP + diphosphate. Its function is as follows. Is required not only for elongation of protein synthesis but also for the initiation of all mRNA translation through initiator tRNA(fMet) aminoacylation. The chain is Methionine--tRNA ligase from Rhizobium meliloti (strain 1021) (Ensifer meliloti).